We begin with the raw amino-acid sequence, 627 residues long: MKFSWRTALLWSLPLLVVGFFFWQGSFGGADANLGSNTANTRMTYGRFLEYVDAGRITSVDLYENGRTAIVQVSDPEVDRTLRSRVDLPTNAPELIARLRDSNIRLDSHPVRNNGMVWGFVGNLIFPVLLIASLFFLFRRSSNMPGGPGQAMNFGKSKARFQMDAKTGVMFDDVAGIDEAKEELQEVVTFLKQPERFTAVGAKIPKGVLLVGPPGTGKTLLAKAIAGEAGVPFFSISGSEFVEMFVGVGASRVRDLFKKAKENAPCLIFIDEIDAVGRQRGAGIGGGNDEREQTLNQLLTEMDGFEGNTGIIIIAATNRPDVLDSALMRPGRFDRQVMVDAPDYSGRKEILEVHARNKKLAPEVSIDSIARRTPGFSGADLANLLNEAAILTARRRKSAITLLEIDDAVDRVVAGMEGTPLVDSKSKRLIAYHEVGHAIVGTLLKDHDPVQKVTLIPRGQAQGLTWFTPNEEQGLTTKAQLMARIAGAMGGRAAEEEVFGDDEVTTGAGGDLQQVTEMARQMVTRFGMSNLGPISLESSGGEVFLGGGLMNRSEYSEEVATRIDAQVRQLAEQGHQMARKIVQEQREVVDRLVDLLIEKETIDGEEFRQIVAEYAEVPVKEQLIPQL.

The Cytoplasmic portion of the chain corresponds to 1–7; it reads MKFSWRT. The helical transmembrane segment at 8–28 threads the bilayer; that stretch reads ALLWSLPLLVVGFFFWQGSFG. The Lumenal portion of the chain corresponds to 29-117; that stretch reads GADANLGSNT…SHPVRNNGMV (89 aa). The chain crosses the membrane as a helical span at residues 118–138; that stretch reads WGFVGNLIFPVLLIASLFFLF. At 139–627 the chain is on the cytoplasmic side; that stretch reads RRSSNMPGGP…PVKEQLIPQL (489 aa). 212 to 219 provides a ligand contact to ATP; the sequence is GPPGTGKT. His-433 contacts Zn(2+). The active site involves Glu-434. His-437 and Asp-511 together coordinate Zn(2+).

It in the central section; belongs to the AAA ATPase family. In the C-terminal section; belongs to the peptidase M41 family. In terms of assembly, homohexamer (Potential). Part of a large (&gt;500 kDa) complex that includes FtsH3 and PSII. Coimmunoprecipitates with YidC. Requires Zn(2+) as cofactor.

It is found in the cellular thylakoid membrane. Functionally, acts as a processive, ATP-dependent zinc metallopeptidase for both cytoplasmic and membrane proteins. Plays a role in the quality control of integral membrane proteins. Plays a role in the selective replacement of photosystem II (PSII) protein D1 in the PSII repair cycle following visible-light and UV-B induced damage. If damaged D1 is not removed then new D1 cannot be inserted to restore the PSII reaction center. Seems to also degrade damaged and/or unassembled PSII proteins D2 and PsbB (CP47). May recognize D1 via its first 20 amino acids, as deletion of these prevents the PSII repair cycle. Also seems to degrade cytoplasmic GGPS, glucosylglycerol-phosphate synthase. This chain is ATP-dependent zinc metalloprotease FtsH 2 (ftsH2), found in Synechocystis sp. (strain ATCC 27184 / PCC 6803 / Kazusa).